The following is a 121-amino-acid chain: uncharacterized protein (121 aa).

Disordered regions lie at residues 1–41 (MRRQ…QESR) and 94–121 (GGTI…GLRR). Positions 98 to 108 (SGQQSRNSSLP) are enriched in polar residues.

In terms of tissue distribution, predominantly expressed in tissues containing motile cilia. Also expressed in non-motile ciliated adult olfactory bulbs.

It localises to the cytoplasm. Its subcellular location is the cytoskeleton. It is found in the cilium basal body. This is an uncharacterized protein from Mus musculus (Mouse).